A 220-amino-acid chain; its full sequence is Ribosomal RNA small subunit methyltransferase Nep1 (220 aa).

S-adenosyl-L-methionine-binding positions include glycine 178, glycine 183, and 196 to 201 (LYREPL).

Belongs to the class IV-like SAM-binding methyltransferase superfamily. RNA methyltransferase NEP1 family. Homodimer.

The catalysed reaction is a pseudouridine in rRNA + S-adenosyl-L-methionine = an N(1)-methylpseudouridine in rRNA + S-adenosyl-L-homocysteine + H(+). In terms of biological role, methyltransferase involved in ribosomal biogenesis. Specifically catalyzes the N1-methylation of the pseudouridine corresponding to position 914 in M.jannaschii 16S rRNA. In Thermococcus kodakarensis (strain ATCC BAA-918 / JCM 12380 / KOD1) (Pyrococcus kodakaraensis (strain KOD1)), this protein is Ribosomal RNA small subunit methyltransferase Nep1.